Reading from the N-terminus, the 143-residue chain is Nucleoside diphosphate kinase (143 aa).

Positions 11, 59, 87, 93, 104, and 114 each coordinate ATP. Catalysis depends on histidine 117, which acts as the Pros-phosphohistidine intermediate.

The protein belongs to the NDK family. In terms of assembly, homotetramer. Mg(2+) serves as cofactor.

The protein localises to the cytoplasm. It catalyses the reaction a 2'-deoxyribonucleoside 5'-diphosphate + ATP = a 2'-deoxyribonucleoside 5'-triphosphate + ADP. It carries out the reaction a ribonucleoside 5'-diphosphate + ATP = a ribonucleoside 5'-triphosphate + ADP. Functionally, major role in the synthesis of nucleoside triphosphates other than ATP. The ATP gamma phosphate is transferred to the NDP beta phosphate via a ping-pong mechanism, using a phosphorylated active-site intermediate. This is Nucleoside diphosphate kinase from Pseudoalteromonas atlantica (strain T6c / ATCC BAA-1087).